We begin with the raw amino-acid sequence, 170 residues long: Large ribosomal subunit protein uL5 (170 aa).

It belongs to the universal ribosomal protein uL5 family. Component of the large ribosomal subunit.

The protein resides in the nucleus. It localises to the cytoplasm. In terms of biological role, component of the ribosome, a large ribonucleoprotein complex responsible for the synthesis of proteins in the cell. The small ribosomal subunit (SSU) binds messenger RNAs (mRNAs) and translates the encoded message by selecting cognate aminoacyl-transfer RNA (tRNA) molecules. The large subunit (LSU) contains the ribosomal catalytic site termed the peptidyl transferase center (PTC), which catalyzes the formation of peptide bonds, thereby polymerizing the amino acids delivered by tRNAs into a polypeptide chain. The nascent polypeptides leave the ribosome through a tunnel in the LSU and interact with protein factors that function in enzymatic processing, targeting, and the membrane insertion of nascent chains at the exit of the ribosomal tunnel. The polypeptide is Large ribosomal subunit protein uL5 (RPL11) (Chlamydomonas reinhardtii (Chlamydomonas smithii)).